The sequence spans 333 residues: Trimethylamine N-oxide-binding protein (333 aa).

A signal peptide spans 1 to 42; that stretch reads MRLFREIAANDPGPTGRMKNMKTFTTALATGVLALCPLAALA. The trimethylamine N-oxide site is built by tryptophan 55, tryptophan 102, glutamate 131, tryptophan 177, and tryptophan 222. The Ca(2+) site is built by proline 249, valine 251, asparagine 254, alanine 257, and aspartate 260.

In terms of assembly, the complex is probably composed of two ATP-binding proteins (TmoW), two transmembrane proteins (TmoV) and a solute-binding protein (TmoX). Monomer in solution, but forms homodimers in crystals.

It is found in the periplasm. Its activity is regulated as follows. Binds a Ca(2+) ion, which has little effect on either the binding affinity or the secondary structure, but plays an important role in maintaining the stability of TmoX. It may modulate the protein stability in response to biological needs and environmental changes. Thermostability is dramatically decreased when Ca(2+) is removed by EDTA. In terms of biological role, part of the ABC transporter complex TmoXWV involved in trimethylamine N-oxide (TMAO) import. Is specific for TMAO and essential for TMAO metabolism. Binds TMAO with high affinity. In vitro, also presents a high binding affinity for choline, however this transporter seems specific for TMAO and the choline-binding affinity presented by recombinant TmoX may not make physiological sense. This Ruegeria pomeroyi (strain ATCC 700808 / DSM 15171 / DSS-3) (Silicibacter pomeroyi) protein is Trimethylamine N-oxide-binding protein.